Here is a 534-residue protein sequence, read N- to C-terminus: MTDNRTSFRLEILNRLCKRERQQRCVKDMFKNYSLLDEQLQQSHRSRSVSVNDEHFKGNVNDRLAVMKEEMANVYRMKSKNDQDLIDANRKLADSESRYSLVSSQRDKLRIETDAIVKKMTVLENELAELKEENSVINTERVSLVATCNYLTEKKTQLDNERFQLLNRIRELQEKSAEFMNAEIALQEERAQMRIREQIAKATADLNLGDERASSAFGTSPETLDEFMMTDVLPSEVKFKLSTHDGEVHDVEWMSDDTFATAGSDSKVQIWRVSPNKTDASKVSTLSGCLGPVNRLDYDSQRHVCLASSNDKTCRLWNIDSQRLLSTFSGHTDKVSSARLFQSHNVISGSADRTIKNWDISSIRCLKSYLVGSTVFDIVAKCGVSQSSFISSHFDKKVRFWDARSSDATYSVELGQKVSSLDISMDGLQVLASSRDDTLSLIDVRNYGIIHLYSAEQYKTSCDSTRAIFSSTGEYVLAGSSNSSVFIWNTKTTKLEKVVKTARSDSAQIMSLAWNPSGRGLLACDRQKTCTLWR.

WD repeat units lie at residues 243–281 (THDG…TDAS), 288–329 (GCLG…STFS), 330–368 (GHTD…CLKS), 371–411 (VGST…ATYS), 413–452 (ELGQ…IIHL), 459–498 (KTSC…LEKV), and 504–534 (SDSA…TLWR).

It belongs to the WD repeat tipD family. As to quaternary structure, homodimer (via N-terminus). Most likely a component of a complex at least containing atg-5, lgg-3, atg-16.1 and/or atg-16.2. Interacts (via N-terminus) with atg-16.1 (via N-terminus). Interacts (via N-terminus) with atg-5. Interacts (via WD 5-6 repeats) with lgg-2; the interaction is direct. Expressed in neurons, pharyngeal muscles, body wall muscle cells and intestinal cells.

The protein localises to the cytoplasm. The protein resides in the cell membrane. Most likely a component of the atg-5-atg-12-atg-16.1/atg-16.2 complex, which is recruited to the preautophagosomal membrane and associates with lgg-2 to promote autophagosome formation. Plays a role in the recruitment of lipidated lgg-1 probably to the autophagosome membrane to promote autophagosome formation. Furthermore, association with atg-5 is required for the nucleation of lgg-1 positive autophagosomes. Although its role in autophagosome formation may be distinct to the role of atg-16.2, it functions in a partially redundant manner with atg-16.1 to regulate autophagic processes. In a daf-18/PTEN- and daf-16/FOXO-dependent manner, required for maintaining the numbers of germ stem cell progenitors in the gonad during the late phases of larval development. This chain is Autophagic-related protein 16.2, found in Caenorhabditis elegans.